Here is a 729-residue protein sequence, read N- to C-terminus: Fatty acid oxidation complex subunit alpha (729 aa).

Positions 1-189 are enoyl-CoA hydratase/isomerase; that stretch reads MLYQSETLQL…KIGLVDAVVD (189 aa). Residue Asp-296 participates in substrate binding. A 3-hydroxyacyl-CoA dehydrogenase region spans residues 311-729; that stretch reads AAPKLAAVLG…LLDVSTNQPA (419 aa). NAD(+) is bound by residues Met-324, Asp-343, 400-402, Lys-407, and Ser-429; that span reads VVE. Residue His-450 is the For 3-hydroxyacyl-CoA dehydrogenase activity of the active site. Asn-453 contacts NAD(+). Substrate contacts are provided by Asn-500 and Tyr-660.

The protein in the N-terminal section; belongs to the enoyl-CoA hydratase/isomerase family. In the C-terminal section; belongs to the 3-hydroxyacyl-CoA dehydrogenase family. In terms of assembly, heterotetramer of two alpha chains (FadB) and two beta chains (FadA).

The enzyme catalyses a (3S)-3-hydroxyacyl-CoA + NAD(+) = a 3-oxoacyl-CoA + NADH + H(+). The catalysed reaction is a (3S)-3-hydroxyacyl-CoA = a (2E)-enoyl-CoA + H2O. It carries out the reaction a 4-saturated-(3S)-3-hydroxyacyl-CoA = a (3E)-enoyl-CoA + H2O. It catalyses the reaction (3S)-3-hydroxybutanoyl-CoA = (3R)-3-hydroxybutanoyl-CoA. The enzyme catalyses a (3Z)-enoyl-CoA = a 4-saturated (2E)-enoyl-CoA. The catalysed reaction is a (3E)-enoyl-CoA = a 4-saturated (2E)-enoyl-CoA. Its pathway is lipid metabolism; fatty acid beta-oxidation. Its function is as follows. Involved in the aerobic and anaerobic degradation of long-chain fatty acids via beta-oxidation cycle. Catalyzes the formation of 3-oxoacyl-CoA from enoyl-CoA via L-3-hydroxyacyl-CoA. It can also use D-3-hydroxyacyl-CoA and cis-3-enoyl-CoA as substrate. In Yersinia pestis bv. Antiqua (strain Antiqua), this protein is Fatty acid oxidation complex subunit alpha.